The following is a 180-amino-acid chain: MDSINSSIYFCAYFRELIIKLLMAPLGVSGLVGKLSTELEVDCDAEKYYNMYKHGEDVQKAVPHLCVDVKVISGDPTRSGCIKEWNVNIDGKTIRSVEETTHNDETKTLRHRVFEGDMMKDFKKFDTIMVVNPKPDGNGCVVTRSIEYEKTNENSPTPFDYLQFGHQAIEDMNKYLRDSE.

Ser96 contributes to the thebaine binding site. The Proton acceptor role is filled by His111. A thebaine-binding site is contributed by Thr127.

The protein belongs to the MLP family. As to quaternary structure, homodimer (allosteric) and oligomers. In terms of tissue distribution, expressed in poppy latex.

The catalysed reaction is (7S)-O-acetylsalutaridinol = thebaine + acetate + H(+). It functions in the pathway alkaloid biosynthesis; morphine biosynthesis. Its function is as follows. Catalyzes the formation of thebaine from (7S)-salutaridinol 7-O-acetate at the expense of labile hydroxylated by-products, which are preferentially produced by spontaneous allylic elimination. This chain is Thebaine synthase 1, found in Papaver somniferum (Opium poppy).